The chain runs to 91 residues: UPF0250 protein PputW619_0619 (91 aa).

Belongs to the UPF0250 family.

The sequence is that of UPF0250 protein PputW619_0619 from Pseudomonas putida (strain W619).